The following is a 113-amino-acid chain: UPF0122 protein LSEI_1603 (113 aa).

This sequence belongs to the UPF0122 family.

Functionally, might take part in the signal recognition particle (SRP) pathway. This is inferred from the conservation of its genetic proximity to ftsY/ffh. May be a regulatory protein. This chain is UPF0122 protein LSEI_1603, found in Lacticaseibacillus paracasei (strain ATCC 334 / BCRC 17002 / CCUG 31169 / CIP 107868 / KCTC 3260 / NRRL B-441) (Lactobacillus paracasei).